Consider the following 90-residue polypeptide: Progonadoliberin-1 (90 aa).

Residues 1–21 (MILKLMAGILLLTVCLEGCSS) form the signal peptide. Q22 carries the pyrrolidone carboxylic acid modification. G31 is modified (glycine amide).

Belongs to the GnRH family. In terms of processing, the precursor is cleaved by ACE, which removes the Gly-Lys-Arg peptide at the C-terminus, leading to mature hormone. The mature form of Gonadoliberin-1 is also cleaved and degraded by ACE.

It localises to the secreted. Stimulates the secretion of gonadotropins; it stimulates the secretion of both luteinizing and follicle-stimulating hormones. This chain is Progonadoliberin-1 (Gnrh1), found in Mus musculus (Mouse).